The primary structure comprises 348 residues: MENLNPACASEDVKNALTSPIMMLSHGFILMIIVVSFITTALAVQTLWYKNVFPFCTKNLLLSAIVNGIFHQSTVAEIRLKTVYHLIRYSNAPCSILFQSSDCFYDNFLYYQTALFSSFYCVSLFLDRLFSLNPRSFYNSHQTLGFIVFLILQIICPIAIQFWTFHDSDYTSYVPMCNYPPASSVSGTKFYFINDSRIIIMGTIFMCSLFLYIHNKSREKRMIFNVYNTDSRYKSYENFLATRAVCIIIFSQITCLGITSFVPSIFNQFRQSISPDWFHLILAFMAGATYSNFFLPLIVIYETQLIIAHRHKLIKKLKSQKEEFSDHFASLDFVWEREANKKKTQLVQ.

6 helical membrane passes run 28–48 (FILM…QTLW), 108–130 (FLYY…DRLF), 145–165 (GFIV…FWTF), 193–213 (INDS…FLYI), 246–266 (CIII…PSIF), and 280–300 (LILA…LIVI).

Belongs to the nematode receptor-like protein sra family.

The protein localises to the membrane. In Caenorhabditis elegans, this protein is Serpentine receptor class alpha-29 (sra-29).